Here is a 481-residue protein sequence, read N- to C-terminus: Cysteine--tRNA ligase (481 aa).

Cys-29 is a binding site for Zn(2+). Positions 31–41 (VTVYDHCHIGH) match the 'HIGH' region motif. 3 residues coordinate Zn(2+): Cys-209, His-234, and Glu-238. The short motif at 266–270 (KMSKS) is the 'KMSKS' region element. ATP is bound at residue Lys-269.

The protein belongs to the class-I aminoacyl-tRNA synthetase family. In terms of assembly, monomer. It depends on Zn(2+) as a cofactor.

It is found in the cytoplasm. The enzyme catalyses tRNA(Cys) + L-cysteine + ATP = L-cysteinyl-tRNA(Cys) + AMP + diphosphate. This chain is Cysteine--tRNA ligase, found in Geobacter sulfurreducens (strain ATCC 51573 / DSM 12127 / PCA).